Reading from the N-terminus, the 249-residue chain is U1 small nuclear ribonucleoprotein usp102 (249 aa).

The disordered stretch occupies residues 1–25 (MDPQTNSHQEVQQPSPKETDSQTPS). Residues 26–105 (ETLYIRNIEE…KPMMIQYSKS (80 aa)) form the RRM 1 domain. The interval 113 to 157 (RESPEEIETRKKDRKNRREMLKRTSALQPAAPKPTHKKPVPKRNV) is disordered. Residues 114-134 (ESPEEIETRKKDRKNRREMLK) show a composition bias toward basic and acidic residues. The 74-residue stretch at 174–247 (KVLLLQNIPQ…NQIKVTFARK (74 aa)) folds into the RRM 2 domain.

The protein belongs to the RRM U1 A/B'' family. As to quaternary structure, component of the spliceosome where it is associated with snRNP U1.

The protein resides in the nucleus. The protein localises to the nucleolus. Its function is as follows. Involved in nuclear mRNA splicing. In Schizosaccharomyces pombe (strain 972 / ATCC 24843) (Fission yeast), this protein is U1 small nuclear ribonucleoprotein usp102.